The sequence spans 332 residues: Glycerol-3-phosphate dehydrogenase [NAD(P)+] (332 aa).

The NADPH site is built by serine 11, phenylalanine 12, lysine 32, and lysine 106. Sn-glycerol 3-phosphate contacts are provided by lysine 106, glycine 137, and serine 139. Position 141 (alanine 141) interacts with NADPH. Residues lysine 192, aspartate 245, serine 255, arginine 256, and asparagine 257 each coordinate sn-glycerol 3-phosphate. Lysine 192 (proton acceptor) is an active-site residue. Position 256 (arginine 256) interacts with NADPH. Valine 280 and glutamate 282 together coordinate NADPH.

This sequence belongs to the NAD-dependent glycerol-3-phosphate dehydrogenase family.

Its subcellular location is the cytoplasm. It catalyses the reaction sn-glycerol 3-phosphate + NAD(+) = dihydroxyacetone phosphate + NADH + H(+). The catalysed reaction is sn-glycerol 3-phosphate + NADP(+) = dihydroxyacetone phosphate + NADPH + H(+). It participates in membrane lipid metabolism; glycerophospholipid metabolism. In terms of biological role, catalyzes the reduction of the glycolytic intermediate dihydroxyacetone phosphate (DHAP) to sn-glycerol 3-phosphate (G3P), the key precursor for phospholipid synthesis. The polypeptide is Glycerol-3-phosphate dehydrogenase [NAD(P)+] (Staphylococcus epidermidis (strain ATCC 35984 / DSM 28319 / BCRC 17069 / CCUG 31568 / BM 3577 / RP62A)).